The chain runs to 224 residues: Cytidylate kinase (224 aa).

Residue 10–18 participates in ATP binding; it reads GPASAGKST.

Belongs to the cytidylate kinase family. Type 1 subfamily.

The protein localises to the cytoplasm. The enzyme catalyses CMP + ATP = CDP + ADP. It carries out the reaction dCMP + ATP = dCDP + ADP. In Leuconostoc mesenteroides subsp. mesenteroides (strain ATCC 8293 / DSM 20343 / BCRC 11652 / CCM 1803 / JCM 6124 / NCDO 523 / NBRC 100496 / NCIMB 8023 / NCTC 12954 / NRRL B-1118 / 37Y), this protein is Cytidylate kinase.